The chain runs to 92 residues: MTTKHVLVSGIVQGVGYRAWARQEATRRNLTGWVRNCADGRVEALLEGEADAVDDMLNAMHQGPALAQVDRILVEEGNNDDDGPRSTHFEVT.

In terms of domain architecture, Acylphosphatase-like spans 3–92 (TKHVLVSGIV…GPRSTHFEVT (90 aa)). Active-site residues include R18 and N36.

This sequence belongs to the acylphosphatase family.

The catalysed reaction is an acyl phosphate + H2O = a carboxylate + phosphate + H(+). The chain is Acylphosphatase (acyP) from Alcanivorax borkumensis (strain ATCC 700651 / DSM 11573 / NCIMB 13689 / SK2).